The chain runs to 163 residues: Putative 4-hydroxy-4-methyl-2-oxoglutarate aldolase (163 aa).

Residues 76–79 (GDML) and arginine 98 contribute to the substrate site. Aspartate 99 is an a divalent metal cation binding site.

Belongs to the class II aldolase/RraA-like family. Homotrimer. A divalent metal cation serves as cofactor.

The enzyme catalyses 4-hydroxy-4-methyl-2-oxoglutarate = 2 pyruvate. The catalysed reaction is oxaloacetate + H(+) = pyruvate + CO2. Catalyzes the aldol cleavage of 4-hydroxy-4-methyl-2-oxoglutarate (HMG) into 2 molecules of pyruvate. Also contains a secondary oxaloacetate (OAA) decarboxylase activity due to the common pyruvate enolate transition state formed following C-C bond cleavage in the retro-aldol and decarboxylation reactions. This Pseudomonas putida (strain W619) protein is Putative 4-hydroxy-4-methyl-2-oxoglutarate aldolase.